A 208-amino-acid polypeptide reads, in one-letter code: Imidazole glycerol phosphate synthase subunit HisH (208 aa).

Residues 1-206 form the Glutamine amidotransferase type-1 domain; the sequence is MIVIIDYDTG…KEVIRSCKSS (206 aa). C79 acts as the Nucleophile in catalysis. Residues H181 and E183 contribute to the active site.

As to quaternary structure, heterodimer of HisH and HisF.

It localises to the cytoplasm. It catalyses the reaction 5-[(5-phospho-1-deoxy-D-ribulos-1-ylimino)methylamino]-1-(5-phospho-beta-D-ribosyl)imidazole-4-carboxamide + L-glutamine = D-erythro-1-(imidazol-4-yl)glycerol 3-phosphate + 5-amino-1-(5-phospho-beta-D-ribosyl)imidazole-4-carboxamide + L-glutamate + H(+). The catalysed reaction is L-glutamine + H2O = L-glutamate + NH4(+). It participates in amino-acid biosynthesis; L-histidine biosynthesis; L-histidine from 5-phospho-alpha-D-ribose 1-diphosphate: step 5/9. In terms of biological role, IGPS catalyzes the conversion of PRFAR and glutamine to IGP, AICAR and glutamate. The HisH subunit catalyzes the hydrolysis of glutamine to glutamate and ammonia as part of the synthesis of IGP and AICAR. The resulting ammonia molecule is channeled to the active site of HisF. In Listeria monocytogenes serotype 4b (strain CLIP80459), this protein is Imidazole glycerol phosphate synthase subunit HisH.